The primary structure comprises 446 residues: Enolase (446 aa).

Mg(2+) is bound at residue Ser-42. Ser-42 bears the Phosphoserine mark. The short motif at 104-108 is the Pentapeptide insert element; sequence EWGWS. Lys-133 carries the post-translational modification N6-acetyllysine. A Glycyl lysine isopeptide (Lys-Gly) (interchain with G-Cter in ubiquitin) cross-link involves residue Lys-138. Tyr-139 is modified (phosphotyrosine). 2 residues coordinate substrate: His-166 and Glu-175. The Proton donor role is filled by Glu-218. Asp-253 provides a ligand contact to Mg(2+). Positions 277–282 match the DKSLVK motif motif; that stretch reads DKSLVK. Mg(2+) is bound by residues Glu-304 and Asp-331. Substrate-binding residues include Glu-304 and Asp-331. Position 339 is a phosphothreonine (Thr-339). The active-site Proton acceptor is Lys-356. At Lys-375 the chain carries N6-acetyllysine. Residues 383-386 and Lys-407 contribute to the substrate site; that span reads SHRS.

The protein belongs to the enolase family. As to quaternary structure, homodimer. Forms a complex at least composed of DegP, ENO and HSP70. Interacts with G-actin. Interacts (via the DKSLVK motif) with mammalian host PLG/plasminogen (present in the mosquito blood meal); the interaction occurs at the ookinete cell surface and is required for ookinete invasion of the mosquito midgut. Interacts with A.gambiae EBP; depending on the Plasmodium species, the interaction is either involved in ookinete invasion of the mosquito midgut (P.berghei) or is dispensable (P.falciparum). It depends on Mg(2+) as a cofactor.

It is found in the cytoplasm. The protein localises to the nucleus. It localises to the cytoskeleton. Its subcellular location is the cell surface. The protein resides in the cell membrane. It is found in the vacuole. The enzyme catalyses (2R)-2-phosphoglycerate = phosphoenolpyruvate + H2O. Its pathway is carbohydrate degradation; glycolysis; pyruvate from D-glyceraldehyde 3-phosphate: step 4/5. Its function is as follows. Glycolytic enzyme that catalyzes the conversion of 2-phosphoglycerate to phosphoenolpyruvate. In addition to glycolysis, involved in various processes such as parasite development and invasion. Plays an essential role during ookinete invasion of the mosquito vector midgut by mediating the interaction of the ookinete with the midgut epithelium and, further, by binding to mammalian host plasminogen in the blood meal, whose conversion to active plasmin promotes the invasion process. This Plasmodium falciparum protein is Enolase.